A 794-amino-acid polypeptide reads, in one-letter code: Putative neurotrophin receptor LTRK 1 (794 aa).

The N-terminal stretch at 1 to 33 is a signal peptide; it reads MRGPRRFRLWTRANVLTVISILTSILSGAGCSP. Residues 34–419 lie on the Extracellular side of the membrane; the sequence is LSQLPSDNPA…PTEDFGPQTQ (386 aa). Residues 36–102 are disordered; that stretch reads QLPSDNPAHV…DQVPGDASRN (67 aa). N64, N102, and N128 each carry an N-linked (GlcNAc...) asparagine glycan. 2 LRR repeats span residues 181–202 and 205–226; these read CLKH…AFKT and SLET…LLRT. Residues 237–280 enclose the LRRCT domain; sequence NALTCSCTNLWLRSVDVAADRSEMTCSTRDGVSKMKMTQFKCEP. N288 and N374 each carry an N-linked (GlcNAc...) asparagine glycan. Residues 420-440 form a helical membrane-spanning segment; the sequence is VILPVVGVVILLISAVFIIYL. Residues 441–794 lie on the Cytoplasmic side of the membrane; it reads CQRAKHRSHA…GDPVYIDIIA (354 aa). A Protein kinase domain is found at 504–775; the sequence is ILLMRVIGEG…PQDRLTMKDI (272 aa). ATP contacts are provided by residues 510-518 and K538; that span reads IGEGAFGRV. D647 (proton acceptor) is an active-site residue. Residues Y673, Y677, Y678, and Y789 each carry the phosphotyrosine; by autocatalysis modification.

It belongs to the protein kinase superfamily. Tyr protein kinase family. Insulin receptor subfamily. In terms of tissue distribution, expression is confined to the central nervous system and its associated endocrine tissues.

The protein localises to the membrane. The enzyme catalyses L-tyrosyl-[protein] + ATP = O-phospho-L-tyrosyl-[protein] + ADP + H(+). In terms of biological role, may bind an endogenous invertebrate neurotrophin. Binds human NT-3, but not NGF or BDNF. This Lymnaea stagnalis (Great pond snail) protein is Putative neurotrophin receptor LTRK 1.